A 632-amino-acid chain; its full sequence is Serine/threonine-protein kinase plk-2 (632 aa).

The segment at 1–26 (MQRVQPSAARVKSQKKEKAPPDVPDV) is disordered. In terms of domain architecture, Protein kinase spans 36-287 (YEKGKFLGKG…ARAVCRDHFF (252 aa)). Residues 42–50 (LGKGGFAHC) and Lys-65 each bind ATP. The active-site Proton acceptor is the Asp-159. The tract at residues 313-334 (AEENVSPSGTIDQRGPHQAGRS) is disordered. POLO box domains follow at residues 405 to 484 (WISK…YMND) and 506 to 588 (TLRV…RLVE).

The protein belongs to the protein kinase superfamily. Ser/Thr protein kinase family. CDC5/Polo subfamily. As to quaternary structure, interacts (via POLO box domain) with mex-5 and mex-6. Interacts (via POLO box domain) with him-8 (via N-terminus); the interaction mediates plk-2 recruitment to the pairing region of X chromosomes during meiosis. Interacts with sun-1. May interact with nicotinic acetylcholine receptor. The cofactor is Mg(2+). As to expression, expressed in oocytes.

It localises to the nucleus. The protein localises to the cytoplasm. The protein resides in the cytoskeleton. It is found in the microtubule organizing center. Its subcellular location is the centrosome. It localises to the chromosome. The protein localises to the centromere. The protein resides in the kinetochore. It carries out the reaction L-seryl-[protein] + ATP = O-phospho-L-seryl-[protein] + ADP + H(+). The catalysed reaction is L-threonyl-[protein] + ATP = O-phospho-L-threonyl-[protein] + ADP + H(+). Serine/threonine-protein kinase which plays a role, during oogenesis, in chromosome pairing and synapsis, by facilitating the recruitment and attachment of meiotic chromosomes to the nuclear envelope during prophase. Promotes the localization of brc-1 to the short arm of homologous chromosomes during meiotic prophase I. Regulates the formation of sun-1 patches along the nuclear envelope. Promotes meiotic nuclei apoptosis in response to chromosomal asynapsis. Plays a redundant role with plk-1 in the establishment of cell polarity downstream of mex-5 and mex-6 during the first embryonic cell divisions. Plays a role in nicotinic acetylcholine receptor-mediated sensitivity to nicotine but not levamisole. Regulates motility. This Caenorhabditis elegans protein is Serine/threonine-protein kinase plk-2.